We begin with the raw amino-acid sequence, 156 residues long: Ribosomal RNA large subunit methyltransferase H (156 aa).

S-adenosyl-L-methionine is bound by residues leucine 73, glycine 104, and 123–128 (LSALTL).

The protein belongs to the RNA methyltransferase RlmH family. As to quaternary structure, homodimer.

It localises to the cytoplasm. It catalyses the reaction pseudouridine(1915) in 23S rRNA + S-adenosyl-L-methionine = N(3)-methylpseudouridine(1915) in 23S rRNA + S-adenosyl-L-homocysteine + H(+). In terms of biological role, specifically methylates the pseudouridine at position 1915 (m3Psi1915) in 23S rRNA. In Psychromonas ingrahamii (strain DSM 17664 / CCUG 51855 / 37), this protein is Ribosomal RNA large subunit methyltransferase H.